A 481-amino-acid polypeptide reads, in one-letter code: Glutamate--tRNA ligase 1 (481 aa).

Positions 11–21 match the 'HIGH' region motif; sequence PSPTGSLHIGG. Residues 244–248 carry the 'KMSKS' region motif; that stretch reads KLSKR. Lysine 247 is a binding site for ATP.

The protein belongs to the class-I aminoacyl-tRNA synthetase family. Glutamate--tRNA ligase type 1 subfamily. Monomer.

The protein localises to the cytoplasm. It catalyses the reaction tRNA(Glu) + L-glutamate + ATP = L-glutamyl-tRNA(Glu) + AMP + diphosphate. Catalyzes the attachment of glutamate to tRNA(Glu) in a two-step reaction: glutamate is first activated by ATP to form Glu-AMP and then transferred to the acceptor end of tRNA(Glu). The sequence is that of Glutamate--tRNA ligase 1 from Caldanaerobacter subterraneus subsp. tengcongensis (strain DSM 15242 / JCM 11007 / NBRC 100824 / MB4) (Thermoanaerobacter tengcongensis).